The following is a 1639-amino-acid chain: Protein GFS12 (1639 aa).

The Protein kinase 1 domain maps to 206–294 (LEEKSKLRCL…IRPSNILLSD (89 aa)). In terms of domain architecture, BEACH spans 336 to 608 (LKISSHLDWQ…FHGFGVDNKR (273 aa)). Positions 715 to 788 (IAGDIFSIGC…AKSLLDSPYF (74 aa)) constitute a Protein kinase 2 domain. WD repeat units lie at residues 1290 to 1333 (AHHG…CVSS) and 1336 to 1373 (AHEE…LISL). The segment covering 1377–1398 (SPSDQDQASSDPSSKNNSNPCN) has biased composition (low complexity). A disordered region spans residues 1377-1399 (SPSDQDQASSDPSSKNNSNPCNR). 3 WD repeats span residues 1465 to 1499 (ALCS…RLFD), 1511 to 1549 (AHDG…TPQP), and 1609 to 1639 (RVKS…RICC).

The protein belongs to the protein kinase superfamily. Tyr protein kinase family. As to quaternary structure, interacts (via protein kinase 2 domain) with BCHC1 (via PH-BEACH domain). Weakly expressed in the cotyledons of germinating seedlings. Restricted to the vascular tissues of cotyledons. Detected in root tips, apical meristem, young flower buds and receptacles.

Its function is as follows. May act predominantly to suppress BCHC1, which itself is a negative factor in protein storage vacuole (PSV) trafficking regulation and plant effector triggered immunity (ETI). Required for ETI, but not for cell death. The protein is Protein GFS12 of Arabidopsis thaliana (Mouse-ear cress).